The following is a 318-amino-acid chain: 26 kDa endochitinase 1 (318 aa).

An N-terminal signal peptide occupies residues 1–19 (MRAFVLFAVVAMAATMAVA). The 40-residue stretch at 20–59 (EQCGSQAGGATCPNCLCCSRFGWCGSTPYCGDGCQSQCSG) folds into the Chitin-binding type-1 domain. Intrachain disulfides connect C22/C37, C31/C43, C36/C49, C53/C57, C98/C160, C172/C180, and C279/C311. The active-site Proton donor is E142.

It belongs to the glycosyl hydrolase 19 family. Chitinase class I subfamily.

It carries out the reaction Random endo-hydrolysis of N-acetyl-beta-D-glucosaminide (1-&gt;4)-beta-linkages in chitin and chitodextrins.. Defense against chitin-containing fungal pathogens. The sequence is that of 26 kDa endochitinase 1 from Hordeum vulgare (Barley).